Here is a 188-residue protein sequence, read N- to C-terminus: Non-structural protein NS2 (188 aa).

As to quaternary structure, interacts with host SNRPN. Interacts with host XPO1.

The protein localises to the host nucleus. In terms of biological role, plays an essential role in viral protein synthesis. Plays also a role in active nuclear export of mature particles before host cell lysis, by interacting with host XPO1. The chain is Non-structural protein NS2 (NS2) from Mus musculus (Mouse).